The sequence spans 305 residues: Olfactory receptor 9G9 (305 aa).

Topologically, residues 1-27 (MQRSNHTVTEFILLGFTTDPGMQLGLF) are extracellular. Residue N5 is glycosylated (N-linked (GlcNAc...) asparagine). A helical transmembrane segment spans residues 28-48 (VVFLGVYSLTVVGNSTLIVLI). At 49-64 (CNDSHLHTPMYFVVGN) the chain is on the cytoplasmic side. The helical transmembrane segment at 65–85 (LSFLDLWYSSVYTPKILVICI) threads the bilayer. The Extracellular segment spans residues 86-96 (SEDKSISFAGC). The cysteines at positions 96 and 178 are disulfide-linked. The helical transmembrane segment at 97–117 (LCQFFFSAGLAYSECCLLAAM) threads the bilayer. Topologically, residues 118–138 (AYDRYVAISKPLLYAQAMSIK) are cytoplasmic. The chain crosses the membrane as a helical span at residues 139–159 (LCALLVAVSYCGGFINSSIIT). At 160-200 (KKTFSFNFCCENIIDDFFCDLLPLVKLACGEKGCYKFLMYF) the chain is on the extracellular side. Residues 201–221 (LLASNVICPAVLILASYLFII) form a helical membrane-spanning segment. At 222 to 239 (TSVLRISSSQGRLKAFST) the chain is on the cytoplasmic side. The helical transmembrane segment at 240–260 (CSSHLTSVTLYYGSILYIYAL) threads the bilayer. Over 261–271 (PRSSYSFDMDK) the chain is Extracellular. Residues 272 to 291 (IVSTFYTEVLPMLNPMIYSL) form a helical membrane-spanning segment. Residues 292–305 (RNKDVKEALKKLLP) are Cytoplasmic-facing.

The protein belongs to the G-protein coupled receptor 1 family.

It is found in the cell membrane. In terms of biological role, odorant receptor. This is Olfactory receptor 9G9 (OR9G9) from Homo sapiens (Human).